The primary structure comprises 380 residues: 1-deoxy-D-xylulose 5-phosphate reductoisomerase (380 aa).

6 residues coordinate NADPH: Thr9, Gly10, Ser11, Val12, Arg36, and Asn117. Lys118 is a binding site for 1-deoxy-D-xylulose 5-phosphate. Glu119 serves as a coordination point for NADPH. Mn(2+) is bound at residue Asp139. 1-deoxy-D-xylulose 5-phosphate-binding residues include Ser140, Glu141, Ser165, and His188. Glu141 contributes to the Mn(2+) binding site. An NADPH-binding site is contributed by Gly194. Residues Ser201, Asn206, Lys207, and Glu210 each contribute to the 1-deoxy-D-xylulose 5-phosphate site. Residue Glu210 coordinates Mn(2+).

The protein belongs to the DXR family. It depends on Mg(2+) as a cofactor. Mn(2+) serves as cofactor.

It carries out the reaction 2-C-methyl-D-erythritol 4-phosphate + NADP(+) = 1-deoxy-D-xylulose 5-phosphate + NADPH + H(+). The protein operates within isoprenoid biosynthesis; isopentenyl diphosphate biosynthesis via DXP pathway; isopentenyl diphosphate from 1-deoxy-D-xylulose 5-phosphate: step 1/6. Functionally, catalyzes the NADPH-dependent rearrangement and reduction of 1-deoxy-D-xylulose-5-phosphate (DXP) to 2-C-methyl-D-erythritol 4-phosphate (MEP). This chain is 1-deoxy-D-xylulose 5-phosphate reductoisomerase, found in Aquifex aeolicus (strain VF5).